We begin with the raw amino-acid sequence, 308 residues long: Acetyl-coenzyme A carboxylase carboxyl transferase subunit beta (308 aa).

One can recognise a CoA carboxyltransferase N-terminal domain in the interval 25–294 (VWTKCTSCEQ…PLVVSVNDSP (270 aa)). Zn(2+) contacts are provided by C29, C32, C48, and C51. Residues 29–51 (CTSCEQVLYHAELERNLEVCPKC) form a C4-type zinc finger.

Belongs to the AccD/PCCB family. As to quaternary structure, acetyl-CoA carboxylase is a heterohexamer composed of biotin carboxyl carrier protein (AccB), biotin carboxylase (AccC) and two subunits each of ACCase subunit alpha (AccA) and ACCase subunit beta (AccD). It depends on Zn(2+) as a cofactor.

The protein resides in the cytoplasm. The enzyme catalyses N(6)-carboxybiotinyl-L-lysyl-[protein] + acetyl-CoA = N(6)-biotinyl-L-lysyl-[protein] + malonyl-CoA. The protein operates within lipid metabolism; malonyl-CoA biosynthesis; malonyl-CoA from acetyl-CoA: step 1/1. Functionally, component of the acetyl coenzyme A carboxylase (ACC) complex. Biotin carboxylase (BC) catalyzes the carboxylation of biotin on its carrier protein (BCCP) and then the CO(2) group is transferred by the transcarboxylase to acetyl-CoA to form malonyl-CoA. This Vibrio vulnificus (strain CMCP6) protein is Acetyl-coenzyme A carboxylase carboxyl transferase subunit beta.